Consider the following 184-residue polypeptide: Ribosome-recycling factor (184 aa).

Belongs to the RRF family.

It is found in the cytoplasm. Functionally, responsible for the release of ribosomes from messenger RNA at the termination of protein biosynthesis. May increase the efficiency of translation by recycling ribosomes from one round of translation to another. The sequence is that of Ribosome-recycling factor from Desulfotalea psychrophila (strain LSv54 / DSM 12343).